Consider the following 481-residue polypeptide: 3-isopropylmalate dehydratase large subunit (481 aa).

[4Fe-4S] cluster-binding residues include cysteine 357, cysteine 417, and cysteine 420.

Belongs to the aconitase/IPM isomerase family. LeuC type 1 subfamily. Heterodimer of LeuC and LeuD. The cofactor is [4Fe-4S] cluster.

It carries out the reaction (2R,3S)-3-isopropylmalate = (2S)-2-isopropylmalate. It functions in the pathway amino-acid biosynthesis; L-leucine biosynthesis; L-leucine from 3-methyl-2-oxobutanoate: step 2/4. Catalyzes the isomerization between 2-isopropylmalate and 3-isopropylmalate, via the formation of 2-isopropylmaleate. This is 3-isopropylmalate dehydratase large subunit from Mycolicibacterium gilvum (strain PYR-GCK) (Mycobacterium gilvum (strain PYR-GCK)).